The following is a 249-amino-acid chain: Phosphate import ATP-binding protein PstB 2 (249 aa).

Residues 4–244 (IEVRDLDLFY…PKDKRTEDYI (241 aa)) form the ABC transporter domain. Position 36–43 (36–43 (GPSGCGKS)) interacts with ATP.

The protein belongs to the ABC transporter superfamily. Phosphate importer (TC 3.A.1.7) family. The complex is composed of two ATP-binding proteins (PstB), two transmembrane proteins (PstC and PstA) and a solute-binding protein (PstS).

Its subcellular location is the cell membrane. It carries out the reaction phosphate(out) + ATP + H2O = ADP + 2 phosphate(in) + H(+). In terms of biological role, part of the ABC transporter complex PstSACB involved in phosphate import. Responsible for energy coupling to the transport system. In Caldanaerobacter subterraneus subsp. tengcongensis (strain DSM 15242 / JCM 11007 / NBRC 100824 / MB4) (Thermoanaerobacter tengcongensis), this protein is Phosphate import ATP-binding protein PstB 2.